The sequence spans 501 residues: 2,3-bisphosphoglycerate-independent phosphoglycerate mutase (501 aa).

Mn(2+)-binding residues include aspartate 10 and serine 60. Serine 60 acts as the Phosphoserine intermediate in catalysis. Residues histidine 121, 151–152 (RD), arginine 182, arginine 188, 256–259 (RPDR), and lysine 329 contribute to the substrate site. Positions 394, 398, 435, 436, and 453 each coordinate Mn(2+).

This sequence belongs to the BPG-independent phosphoglycerate mutase family. As to quaternary structure, monomer. Requires Mn(2+) as cofactor.

It carries out the reaction (2R)-2-phosphoglycerate = (2R)-3-phosphoglycerate. It participates in carbohydrate degradation; glycolysis; pyruvate from D-glyceraldehyde 3-phosphate: step 3/5. In terms of biological role, catalyzes the interconversion of 2-phosphoglycerate and 3-phosphoglycerate. In Mycoplasmopsis synoviae (strain 53) (Mycoplasma synoviae), this protein is 2,3-bisphosphoglycerate-independent phosphoglycerate mutase.